The sequence spans 140 residues: Putative ABC transporter permease protein ORF1 (140 aa).

Residues 1–133 form the ABC transmembrane type-1 domain; sequence DPNVAFYSVV…ITTAGIFAYF (133 aa). 3 consecutive transmembrane segments (helical) span residues 9-29, 65-85, and 115-135; these read VVAVICWQYIPFYMIFFIAAL, TACILSLIGSLKYFDLIYVMT, and TIASAMFLIITTAGIFAYFVT.

This sequence belongs to the binding-protein-dependent transport system permease family. MalFG subfamily.

The protein localises to the cell membrane. Its function is as follows. May play a role in sugar transport. This is Putative ABC transporter permease protein ORF1 from Caldicellulosiruptor sp. (strain Rt8B.4).